We begin with the raw amino-acid sequence, 847 residues long: Leucine--tRNA ligase (847 aa).

The 'HIGH' region motif lies at 41-51; it reads PYPSGRIHMGH. The 'KMSKS' region motif lies at 619–623; it reads KMSKS. K622 contacts ATP.

It belongs to the class-I aminoacyl-tRNA synthetase family.

Its subcellular location is the cytoplasm. It catalyses the reaction tRNA(Leu) + L-leucine + ATP = L-leucyl-tRNA(Leu) + AMP + diphosphate. The chain is Leucine--tRNA ligase from Cereibacter sphaeroides (strain ATCC 17023 / DSM 158 / JCM 6121 / CCUG 31486 / LMG 2827 / NBRC 12203 / NCIMB 8253 / ATH 2.4.1.) (Rhodobacter sphaeroides).